We begin with the raw amino-acid sequence, 596 residues long: Sphingomyelinase C 1 (596 aa).

Residues 1–36 (MITKRNIPCKKNWKYKKKSISLTLITICYMFLFLTS) form the signal peptide. The tract at residues 63-118 (KIEDSTNTDPSSNVNEEDENSINANANDNAPSDSDSSNPRSPDKNPVNPTSPNSSS) is disordered. Residues 67–76 (STNTDPSSNV) are compositionally biased toward polar residues. The span at 83-118 (SINANANDNAPSDSDSSNPRSPDKNPVNPTSPNSSS) shows a compositional bias: low complexity.

It is found in the secreted. It carries out the reaction a sphingomyelin + H2O = phosphocholine + an N-acylsphing-4-enine + H(+). The polypeptide is Sphingomyelinase C 1 (sph1) (Leptospira interrogans serogroup Icterohaemorrhagiae serovar copenhageni (strain Fiocruz L1-130)).